The sequence spans 265 residues: Uridylate kinase (265 aa).

The tract at residues 1–29 (MTESREPHVAGSAAPRPEPANGLASGQPS) is disordered. 40–43 (KLGG) is an ATP binding site. Residue glycine 81 coordinates UMP. ATP contacts are provided by glycine 82 and arginine 86. UMP is bound by residues aspartate 101 and 162–169 (MGLPYFST). Positions 195 and 198 each coordinate ATP.

It belongs to the UMP kinase family. In terms of assembly, homohexamer.

It localises to the cytoplasm. The catalysed reaction is UMP + ATP = UDP + ADP. It functions in the pathway pyrimidine metabolism; CTP biosynthesis via de novo pathway; UDP from UMP (UMPK route): step 1/1. Inhibited by UTP. Its function is as follows. Catalyzes the reversible phosphorylation of UMP to UDP. This chain is Uridylate kinase, found in Mycobacterium avium (strain 104).